A 142-amino-acid chain; its full sequence is Large ribosomal subunit protein uL13 (142 aa).

It belongs to the universal ribosomal protein uL13 family. In terms of assembly, part of the 50S ribosomal subunit.

This protein is one of the early assembly proteins of the 50S ribosomal subunit, although it is not seen to bind rRNA by itself. It is important during the early stages of 50S assembly. In Shewanella frigidimarina (strain NCIMB 400), this protein is Large ribosomal subunit protein uL13.